The sequence spans 533 residues: Protein mono-ADP-ribosyltransferase PARP3 (533 aa).

Residues 1 to 30 (MAPKPKPWVQTEGPEKKKGRQAGREEDPFR) form a disordered region. The residue at position 6 (lysine 6) is an N6-(ADP-ribosyl)lysine. 4 positions are modified to ADP-ribosyl glutamic acid: glutamate 12, glutamate 15, glutamate 26, and glutamate 34. The short motif at 14 to 20 (PEKKKGR) is the Nuclear localization signal element. Residue lysine 37 is modified to N6-(ADP-ribosyl)lysine. The WGR domain occupies 59–150 (GTQVYEDYNC…DHFVSHPGKY (92 aa)). ADP-ribosyl aspartic acid is present on aspartate 141. An ADP-ribosyl glutamic acid modification is found at glutamate 163. The region spanning 182–300 (PCSLDPATQK…DIELAQALQA (119 aa)) is the PARP alpha-helical domain. The residue at position 210 (aspartate 210) is an ADP-ribosyl aspartic acid. Residues glutamate 231, glutamate 309, glutamate 310, glutamate 344, and glutamate 449 each carry the ADP-ribosyl glutamic acid modification. The 221-residue stretch at 313–533 (HPLDRDYQLL…RLRYLLEVHL (221 aa)) folds into the PARP catalytic domain. Residues 454–482 (TDNPSLKSPPPGFDSVIARGHTEPDPTQD) form a disordered region.

It belongs to the ARTD/PARP family. In terms of assembly, interacts with PARP1; leading to activate PARP1 in absence of DNA. Interacts with PRKDC. Interacts with XRCC5/Ku80; the interaction is dependent on nucleic acids. Interacts with XRCC6/Ku70; the interaction is dependent on nucleic acids. Interacts with EZH2, HDAC1, HDAC2, SUZ12, YY1, LRIG3 and LIG4. Post-translationally, auto-mono-ADP-ribosylated. As to expression, widely expressed; the highest levels are in the kidney, skeletal muscle, liver, heart and spleen; also detected in pancreas, lung, placenta, brain, leukocytes, colon, small intestine, ovary, testis, prostate and thymus.

The protein resides in the nucleus. It is found in the chromosome. Its subcellular location is the cytoplasm. The protein localises to the cytoskeleton. It localises to the microtubule organizing center. The protein resides in the centrosome. It is found in the centriole. The catalysed reaction is L-aspartyl-[protein] + NAD(+) = 4-O-(ADP-D-ribosyl)-L-aspartyl-[protein] + nicotinamide. It carries out the reaction L-glutamyl-[protein] + NAD(+) = 5-O-(ADP-D-ribosyl)-L-glutamyl-[protein] + nicotinamide. It catalyses the reaction L-lysyl-[protein] + NAD(+) = N(6)-(ADP-D-ribosyl)-L-lysyl-[protein] + nicotinamide + H(+). Mono-ADP-ribosyltransferase activity of PARP3 is selectively inhibited by ME0328 compound; ME0328 does not inhibit other ARTD/PARP enzymes, such as PARP1. Mono-ADP-ribosyltransferase is strongly inhibited by KU0058948 compound. Functionally, mono-ADP-ribosyltransferase that mediates mono-ADP-ribosylation of target proteins and plays a key role in the response to DNA damage. Mediates mono-ADP-ribosylation of glutamate, aspartate or lysine residues on target proteins. In contrast to PARP1 and PARP2, it is not able to mediate poly-ADP-ribosylation. Involved in DNA repair by mediating mono-ADP-ribosylation of a limited number of acceptor proteins involved in chromatin architecture and in DNA metabolism, such as histone H2B, XRCC5 and XRCC6. ADP-ribosylation follows DNA damage and appears as an obligatory step in a detection/signaling pathway leading to the reparation of DNA strand breaks. Involved in single-strand break repair by catalyzing mono-ADP-ribosylation of histone H2B on 'Glu-2' (H2BE2ADPr) of nucleosomes containing nicked DNA. Cooperates with the XRCC5-XRCC6 (Ku80-Ku70) heterodimer to limit end-resection thereby promoting accurate NHEJ. Suppresses G-quadruplex (G4) structures in response to DNA damage. Associates with a number of DNA repair factors and is involved in the response to exogenous and endogenous DNA strand breaks. Together with APLF, promotes the retention of the LIG4-XRCC4 complex on chromatin and accelerate DNA ligation during non-homologous end-joining (NHEJ). May link the DNA damage surveillance network to the mitotic fidelity checkpoint. Acts as a negative regulator of immunoglobulin class switch recombination, probably by controlling the level of AICDA /AID on the chromatin. In addition to proteins, also able to ADP-ribosylate DNA: mediates DNA mono-ADP-ribosylation of DNA strand break termini via covalent addition of a single ADP-ribose moiety to a 5'- or 3'-terminal phosphate residues in DNA containing multiple strand breaks. The protein is Protein mono-ADP-ribosyltransferase PARP3 of Homo sapiens (Human).